The sequence spans 267 residues: MRRIAVVGAAGRMGKTLIEAVQQAPGAGLTAAIDRPDSTLVGADAGELAALGRIGVPLSGDLAKVADEFDVLIDFTHPSVTLKNLAFCRKAGKAMIIGTTGFSAEEKQRLVEAGKDIPIVFAANFSIGVNLCLKLLDTAARVLGDEVDIEITEAHHRHKVDAPSGTALRMGEVVASALGRDLEKVAVYGREGQTGARDCQTIGFATIRAGDVVGDHTVLFAADGERVEITHKASSRMTFAKGAVRAAMWLDGKAPGLYDMQDVLGLH.

NAD(+) is bound by residues 8-13 and Asp34; that span reads GAAGRM. Residue Arg35 participates in NADP(+) binding. Residues 98 to 100 and 122 to 125 contribute to the NAD(+) site; these read GTT and AANF. The active-site Proton donor/acceptor is the His155. His156 contacts (S)-2,3,4,5-tetrahydrodipicolinate. Catalysis depends on Lys159, which acts as the Proton donor. Residue 165–166 participates in (S)-2,3,4,5-tetrahydrodipicolinate binding; that stretch reads GT.

This sequence belongs to the DapB family.

The protein localises to the cytoplasm. The enzyme catalyses (S)-2,3,4,5-tetrahydrodipicolinate + NAD(+) + H2O = (2S,4S)-4-hydroxy-2,3,4,5-tetrahydrodipicolinate + NADH + H(+). It carries out the reaction (S)-2,3,4,5-tetrahydrodipicolinate + NADP(+) + H2O = (2S,4S)-4-hydroxy-2,3,4,5-tetrahydrodipicolinate + NADPH + H(+). The protein operates within amino-acid biosynthesis; L-lysine biosynthesis via DAP pathway; (S)-tetrahydrodipicolinate from L-aspartate: step 4/4. Its function is as follows. Catalyzes the conversion of 4-hydroxy-tetrahydrodipicolinate (HTPA) to tetrahydrodipicolinate. The polypeptide is 4-hydroxy-tetrahydrodipicolinate reductase (Pseudomonas savastanoi pv. phaseolicola (strain 1448A / Race 6) (Pseudomonas syringae pv. phaseolicola (strain 1448A / Race 6))).